A 763-amino-acid polypeptide reads, in one-letter code: DNA-binding protein SATB1 (763 aa).

A compositionally biased stretch (basic and acidic residues) spans 1–15; sequence MDHLNEATQGKEHSE. The segment at 1–54 is disordered; that stretch reads MDHLNEATQGKEHSEMSNNVSDPKGPPAKIARLEQNGSPLGRGRLGSTGAKMQG. The short motif at 20-40 is the Nuclear localization signal element; it reads VSDPKGPPAKIARLEQNGSPL. Lys-51 participates in a covalent cross-link: Glycyl lysine isopeptide (Lys-Gly) (interchain with G-Cter in SUMO2). The CMP domain maps to 71-172; sequence GTMLPVFCVV…VVTLKIQLHS (102 aa). Lys-136 bears the N6-acetyllysine mark. The Protein interaction signature appears at 139-143; sequence PVPLS. The region spanning 175–248 is the CUTL domain; the sequence is KLEDLPPEQW…WYKHFKKTKD (74 aa). Phosphoserine is present on Ser-185. Residues 224 to 278 form a nuclear matrix targeting sequence (NMTS) region; the sequence is YYANVSAAKCQEFGRWYKHFKKTKDMMVEMDSLSELSQQGANHVNFGQQPVPGNT. Positions 266–296 are enriched in polar residues; it reads HVNFGQQPVPGNTAEQPPSPAQLSHGSQPSV. The segment at 266–307 is disordered; it reads HVNFGQQPVPGNTAEQPPSPAQLSHGSQPSVRTPLPNLHPGL. 2 consecutive DNA-binding regions (CUT) follow at residues 361–448 and 484–571; these read LEQQ…QDER and NGKP…EQES. DNA contacts are provided by residues Gln-390, 400 to 410, and Asn-425; that span reads RTQGLLSEILR. The segment covering 591-607 has biased composition (low complexity); sequence QIQQQQQQQQQQQQQQQ. The disordered stretch occupies residues 591–649; that stretch reads QIQQQQQQQQQQQQQQQAPPPPQPQQQPQTGPRLPPRQPTVASPAESDEENRQKTRPRT. Ser-637 is modified (phosphoserine). Positions 645–704 form a DNA-binding region, homeobox; that stretch reads TRPRTKISVEALGILQSFIQDVGLYPDEEAIQTLSAQLDLPKYTIIKFFQNQRYYLKHHG. Residue Lys-744 forms a Glycyl lysine isopeptide (Lys-Gly) (interchain with G-Cter in SUMO) linkage.

Belongs to the CUT homeobox family. Interacts with CUX1 (via DNA-binding domains); the interaction inhibits the attachment of both proteins to DNA. Homodimer. Part of the nuclear protein complex gamma-globin promoter and enhancer binding factor (gamma-PE) composed at least of SATB1 and HOXB2. Interaction with CtBP1 when not acetylated stabilizes attachment to DNA and promotes transcription repression. Interacts with PCAF. Interacts with sumoylated PML and HDAC1 via the CMP domain. Interacts also with DYNLT3 and POLR2J2. Binds to EP300. As to quaternary structure, (Microbial infection) Interacts (via the CMP domain) with HIV-1 Tat. In terms of processing, sumoylated. Sumoylation promotes cleavage by caspases. Post-translationally, phosphorylated by PKC. Acetylated by PCAF. Phosphorylated form interacts with HDAC1, but unphosphorylated form interacts with PCAF. DNA binding properties are activated by phosphorylation and inactivated by acetylation. In opposition, gene expression is down-regulated by phosphorylation but up-regulated by acetylation. Cleaved at Asp-254 by caspase-3 and caspase-6 during T-cell apoptosis in thymus and during B-cell stimulation. The cleaved forms cannot dimerize and lose transcription regulation function because of impaired DNA and chromatin association. As to expression, expressed predominantly in thymus.

The protein localises to the nucleus matrix. Its subcellular location is the nucleus. It is found in the PML body. Crucial silencing factor contributing to the initiation of X inactivation mediated by Xist RNA that occurs during embryogenesis and in lymphoma. Binds to DNA at special AT-rich sequences, the consensus SATB1-binding sequence (CSBS), at nuclear matrix- or scaffold-associated regions. Thought to recognize the sugar-phosphate structure of double-stranded DNA. Transcriptional repressor controlling nuclear and viral gene expression in a phosphorylated and acetylated status-dependent manner, by binding to matrix attachment regions (MARs) of DNA and inducing a local chromatin-loop remodeling. Acts as a docking site for several chromatin remodeling enzymes (e.g. PML at the MHC-I locus) and also by recruiting corepressors (HDACs) or coactivators (HATs) directly to promoters and enhancers. Modulates genes that are essential in the maturation of the immune T-cell CD8SP from thymocytes. Required for the switching of fetal globin species, and beta- and gamma-globin genes regulation during erythroid differentiation. Plays a role in chromatin organization and nuclear architecture during apoptosis. Interacts with the unique region (UR) of cytomegalovirus (CMV). Alu-like motifs and SATB1-binding sites provide a unique chromatin context which seems preferentially targeted by the HIV-1 integration machinery. Moreover, HIV-1 Tat may overcome SATB1-mediated repression of IL2 and IL2RA (interleukin) in T-cells by binding to the same domain than HDAC1. Delineates specific epigenetic modifications at target gene loci, directly up-regulating metastasis-associated genes while down-regulating tumor-suppressor genes. Reprograms chromatin organization and the transcription profiles of breast tumors to promote growth and metastasis. Promotes neuronal differentiation of neural stem/progenitor cells in the adult subventricular zone, possibly by positively regulating the expression of NEUROD1. This is DNA-binding protein SATB1 from Homo sapiens (Human).